Consider the following 366-residue polypeptide: Growth/differentiation factor 3 (366 aa).

The N-terminal stretch at 1 to 22 (MQPYQRLLALGFLLLTLPWGQT) is a signal peptide. The propeptide occupies 23–252 (SEFQDSDLLQ…HCHPSSRKRR (230 aa)). Residues Asn113 and Asn308 are each glycosylated (N-linked (GlcNAc...) asparagine). 3 disulfides stabilise this stretch: Cys266/Cys331, Cys295/Cys363, and Cys299/Cys365.

The protein belongs to the TGF-beta family. In terms of assembly, homodimer. Heterodimer (Potential). But, in contrast to other members of this family, cannot be disulfide-linked. Post-translationally, synthesized as large precursor molecule that undergo proteolytic cleavage, releasing the pro-domain from the active, receptor binding, C-terminal region of the molecule. In terms of tissue distribution, primarily in adult bone marrow, spleen, thymus and adipose tissue.

Its subcellular location is the secreted. It localises to the cytoplasm. Its function is as follows. Growth factor involved in early embryonic development and adipose-tissue homeostasis. During embryogenesis controls formation of anterior visceral endoderm and mesoderm and the establishment of anterior-posterior identity through a receptor complex comprising the receptor ACVR1B and the coreceptor CRIPTO. Regulates adipose-tissue homeostasis and energy balance under nutrient overload in part by signaling through the receptor complex based on ACVR1C and CRIPTO. The polypeptide is Growth/differentiation factor 3 (Gdf3) (Mus musculus (Mouse)).